The primary structure comprises 91 residues: Small ribosomal subunit protein uS15 (91 aa).

It belongs to the universal ribosomal protein uS15 family. In terms of assembly, part of the 30S ribosomal subunit. Forms a bridge to the 50S subunit in the 70S ribosome, contacting the 23S rRNA.

In terms of biological role, one of the primary rRNA binding proteins, it binds directly to 16S rRNA where it helps nucleate assembly of the platform of the 30S subunit by binding and bridging several RNA helices of the 16S rRNA. Functionally, forms an intersubunit bridge (bridge B4) with the 23S rRNA of the 50S subunit in the ribosome. This Rickettsia typhi (strain ATCC VR-144 / Wilmington) protein is Small ribosomal subunit protein uS15.